A 698-amino-acid polypeptide reads, in one-letter code: Elongation factor G (698 aa).

Residues 8–290 enclose the tr-type G domain; the sequence is ERYRNIGIAA…AVIEFLPAPN (283 aa). GTP is bound by residues 17–24, 88–92, and 142–145; these read AHIDAGKT, DTPGH, and NKMD.

Belongs to the TRAFAC class translation factor GTPase superfamily. Classic translation factor GTPase family. EF-G/EF-2 subfamily.

The protein localises to the cytoplasm. Its function is as follows. Catalyzes the GTP-dependent ribosomal translocation step during translation elongation. During this step, the ribosome changes from the pre-translocational (PRE) to the post-translocational (POST) state as the newly formed A-site-bound peptidyl-tRNA and P-site-bound deacylated tRNA move to the P and E sites, respectively. Catalyzes the coordinated movement of the two tRNA molecules, the mRNA and conformational changes in the ribosome. This is Elongation factor G from Halorhodospira halophila (strain DSM 244 / SL1) (Ectothiorhodospira halophila (strain DSM 244 / SL1)).